Reading from the N-terminus, the 111-residue chain is Universal stress protein B (111 aa).

2 helical membrane-spanning segments follow: residues 1–21 and 90–110; these read MIST…NMAR and FILT…LAIW.

The protein belongs to the universal stress protein B family.

It localises to the cell inner membrane. The polypeptide is Universal stress protein B (Erwinia tasmaniensis (strain DSM 17950 / CFBP 7177 / CIP 109463 / NCPPB 4357 / Et1/99)).